Here is a 660-residue protein sequence, read N- to C-terminus: Phosphatidylinositol-binding clathrin assembly protein (660 aa).

Serine 2 carries the post-translational modification N-acetylserine. An ENTH domain is found at 14 to 145; sequence QHSVTGSAVS…VSYRQVAFDF (132 aa). A phosphoserine mark is found at serine 16 and serine 20. Positions 221 to 294 are interaction with PIMREG; that stretch reads KYFDMKKNQC…LEGKKIKDST (74 aa). Lysine 238 is covalently cross-linked (Glycyl lysine isopeptide (Lys-Gly) (interchain with G-Cter in SUMO2)). Serine 303 and serine 315 each carry phosphoserine. A compositionally biased stretch (polar residues) spans 556–566; sequence GTTKNDVSWSQ. Residues 556-580 are disordered; sequence GTTKNDVSWSQPGEKKLTGGSNWQP.

It belongs to the PICALM/SNAP91 family. Binds to clathrin; involves primarily the C-terminal sequences, but the full-length protein is required for full binding capacity. Binds phosphatidylinositol 4,5- bisphosphate. Interacts with PIMREG; this interaction may change the subcellular location into the nucleus. Interacts with AP2A1 (via its alpha-appendage domain). Interacts (via N-terminus) with VAMP2; VAMP3; VAMP7 and VAMP8 (Via N-terminus). Interacts with LC3/MAP1LC3A. As to expression, skins and livers of 1-week-old mice.

The protein localises to the cell membrane. It is found in the membrane. The protein resides in the clathrin-coated pit. It localises to the golgi apparatus. Its subcellular location is the cytoplasmic vesicle. The protein localises to the clathrin-coated vesicle. It is found in the nucleus. Cytoplasmic adapter protein that plays a critical role in clathrin-mediated endocytosis which is important in processes such as internalization of cell receptors, synaptic transmission or removal of apoptotic cells. Recruits AP-2 and attaches clathrin triskelions to the cytoplasmic side of plasma membrane leading to clathrin-coated vesicles (CCVs) assembly. Furthermore, regulates clathrin-coated vesicle size and maturation by directly sensing and driving membrane curvature. In addition to binding to clathrin, mediates the endocytosis of small R-SNARES (Soluble NSF Attachment Protein REceptors) between plasma membranes and endosomes including VAMP2, VAMP3, VAMP4, VAMP7 or VAMP8. In turn, PICALM-dependent SNARE endocytosis is required for the formation and maturation of autophagic precursors. Modulates thereby autophagy and the turnover of autophagy substrates such as MAPT/TAU or amyloid precursor protein cleaved C-terminal fragment (APP-CTF). The sequence is that of Phosphatidylinositol-binding clathrin assembly protein (Picalm) from Mus musculus (Mouse).